Here is a 527-residue protein sequence, read N- to C-terminus: GMP synthase [glutamine-hydrolyzing] (527 aa).

One can recognise a Glutamine amidotransferase type-1 domain in the interval 4-202; it reads KILILDFGSQ…VLKICGAQPD (199 aa). The active-site Nucleophile is C81. Active-site residues include H176 and E178. The GMPS ATP-PPase domain occupies 203 to 395; that stretch reads WEMGHYIDEA…LGLPPAMVYR (193 aa). 230–236 serves as a coordination point for ATP; the sequence is SGGVDSS.

In terms of assembly, homodimer.

It catalyses the reaction XMP + L-glutamine + ATP + H2O = GMP + L-glutamate + AMP + diphosphate + 2 H(+). It functions in the pathway purine metabolism; GMP biosynthesis; GMP from XMP (L-Gln route): step 1/1. Its function is as follows. Catalyzes the synthesis of GMP from XMP. This is GMP synthase [glutamine-hydrolyzing] from Paraburkholderia xenovorans (strain LB400).